Consider the following 259-residue polypeptide: Peroxiredoxin-4 (259 aa).

In terms of domain architecture, Thioredoxin spans 66 to 224; it reads IRIRKPAPAF…AIRTLKALKF (159 aa). Cys111 functions as the Cysteine sulfenic acid (-SOH) intermediate in the catalytic mechanism.

Belongs to the peroxiredoxin family. AhpC/Prx1 subfamily. Homodimer; disulfide-linked, upon oxidation. 5 homodimers assemble to form a ring-like decamer.

It is found in the cytoplasm. It localises to the endoplasmic reticulum. It carries out the reaction a hydroperoxide + [thioredoxin]-dithiol = an alcohol + [thioredoxin]-disulfide + H2O. Its function is as follows. Thiol-specific peroxidase that catalyzes the reduction of hydrogen peroxide and organic hydroperoxides to water and alcohols, respectively. Plays a role in cell protection against oxidative stress by detoxifying peroxides and as sensor of hydrogen peroxide-mediated signaling events. Regulates the activation of NF-kappa-B in the cytosol by a modulation of I-kappa-B-alpha phosphorylation. The protein is Peroxiredoxin-4 (prdx4) of Dictyostelium discoideum (Social amoeba).